The sequence spans 491 residues: Serine/threonine-protein kinase 3/4 (491 aa).

The segment at 1–24 (MEEVQRRQHPHPRRSLKKLSEDSL) is disordered. Residues 7–17 (RQHPHPRRSLK) show a composition bias toward basic residues. The 252-residue stretch at 32-283 (FDVLEKLGEG…ATQLLQHPFI (252 aa)) folds into the Protein kinase domain. ATP contacts are provided by residues 38-46 (LGEGSYGSV) and Lys61. Asp151 acts as the Proton acceptor in catalysis. At Thr185 the chain carries Phosphothreonine; by autocatalysis. Residues 292–334 (LRDLITDMMEIKLKRQEEQQRDLDQDDEENSEEDDMDSGTMVR) adopt a coiled-coil conformation. 2 disordered regions span residues 307–394 (QEEQ…IQQS) and 406–435 (EKENQANSHSNRNAQALQNSSDNWKVPQDG). Residues 315–328 (DQDDEENSEEDDMD) show a composition bias toward acidic residues. Composition is skewed to polar residues over residues 363 to 373 (TLDSQMGTMVI) and 410 to 428 (QANSHSNRNAQALQNSSDN). Residues 437–484 (FESLKSWSVEELQRRLASLDPTMEQEIEEIRQRYQAKRQPILDAIDAK) enclose the SARAH domain. Residues 442–475 (SWSVEELQRRLASLDPTMEQEIEEIRQRYQAKRQ) adopt a coiled-coil conformation.

It belongs to the protein kinase superfamily. STE Ser/Thr protein kinase family. STE20 subfamily. In terms of assembly, homodimer; mediated via the coiled-coil region. Mg(2+) serves as cofactor. Post-translationally, proteolytically cleaved by caspase-3 during apoptosis at Asp-328 resulting in a 37 kDa form. Proteolytic cleavage results in kinase activation and nuclear translocation of the truncated form (MST1/N).

Its subcellular location is the cytoplasm. The protein localises to the nucleus. The catalysed reaction is L-seryl-[protein] + ATP = O-phospho-L-seryl-[protein] + ADP + H(+). The enzyme catalyses L-threonyl-[protein] + ATP = O-phospho-L-threonyl-[protein] + ADP + H(+). With respect to regulation, inhibited by the C-terminal non-catalytic region. Activated by caspase-cleavage. Full activation also requires homodimerization and autophosphorylation of Thr-185. In terms of biological role, stress-activated, pro-apoptotic kinase which, following caspase-cleavage, enters the nucleus and induces chromatin condensation followed by internucleosomal DNA fragmentation. Key component of the Hippo signaling pathway which plays a pivotal role in organ size control and tumor suppression by restricting proliferation and promoting apoptosis. The core of this pathway is composed of a kinase cascade wherein stk3/mst2 and stk4/mst1, in complex with its regulatory protein sav1, phosphorylates and activates lats1/2 in complex with its regulatory protein mob1, which in turn phosphorylates and inactivates yap1 oncoprotein and wwtr1/taz. Phosphorylation of yap1 by lats2 inhibits its translocation into the nucleus to regulate cellular genes important for cell proliferation, cell death, and cell migration. Phosphorylates 'Ser-14' of histone H2B (H2BS14ph) during apoptosis. In Squalus acanthias (Spiny dogfish), this protein is Serine/threonine-protein kinase 3/4 (STK4).